The chain runs to 203 residues: Thymidylate kinase (203 aa).

9 to 16 contributes to the ATP binding site; it reads GPEGAGKT.

Belongs to the thymidylate kinase family.

It carries out the reaction dTMP + ATP = dTDP + ADP. Its function is as follows. Phosphorylation of dTMP to form dTDP in both de novo and salvage pathways of dTTP synthesis. This Staphylococcus epidermidis (strain ATCC 35984 / DSM 28319 / BCRC 17069 / CCUG 31568 / BM 3577 / RP62A) protein is Thymidylate kinase.